The sequence spans 370 residues: StAR-related lipid transfer protein 7, mitochondrial (370 aa).

Residues 1–58 (MLPRRLLAAWLAGTRGGGLLALLANQCRFVTGLRVRRAQQIAQLYGRLYSESSRRVLL) constitute a mitochondrion transit peptide. The stretch at 86 to 111 (DEERIQEEELQRSINEMKRLEEMSNM) forms a coiled coil. 2 disordered regions span residues 111 to 138 (MFQS…EGKE) and 343 to 370 (MSSE…IEYA). In terms of domain architecture, START spans 112-327 (FQSSGVQHHP…LHMATLKAKN (216 aa)).

In terms of processing, proteolytically cleaved by PARL. Expressed in nasal epithelial cells. Down-regulated in nasal epithelial cells in patients experiencing an asthma exacerbation as compared to stable asthmatics and healthy controls.

It localises to the mitochondrion. In terms of biological role, may play a protective role in mucosal tissues by preventing exaggerated allergic responses. In Homo sapiens (Human), this protein is StAR-related lipid transfer protein 7, mitochondrial (STARD7).